The chain runs to 200 residues: H-2 class I histocompatibility antigen, Q9 alpha chain (200 aa).

The first 21 residues, 1–21 (MALTMLLLLVAAALTLIETRA), serve as a signal peptide directing secretion. Residues 22 to 111 (GQHSLQYFHT…AQSYYNQSKG (90 aa)) are alpha-1. Over 22–200 (GQHSLQYFHT…RYLELGKETL (179 aa)) the chain is Extracellular. N-linked (GlcNAc...) asparagine glycosylation is present at asparagine 107. Residues 112-200 (GSHTLQWMYG…RYLELGKETL (89 aa)) are alpha-2. The cysteines at positions 122 and 185 are disulfide-linked.

Belongs to the MHC class I family. As to quaternary structure, heterodimer of an alpha chain and a beta chain (beta-2-microglobulin).

The protein resides in the membrane. Functionally, involved in the presentation of foreign antigens to the immune system. The protein is H-2 class I histocompatibility antigen, Q9 alpha chain (H2-Q9) of Mus musculus (Mouse).